A 292-amino-acid chain; its full sequence is Homoserine kinase (292 aa).

84-94 (PLARGMGSSSA) provides a ligand contact to ATP.

Belongs to the GHMP kinase family. Homoserine kinase subfamily.

It is found in the cytoplasm. The enzyme catalyses L-homoserine + ATP = O-phospho-L-homoserine + ADP + H(+). Its pathway is amino-acid biosynthesis; L-threonine biosynthesis; L-threonine from L-aspartate: step 4/5. Functionally, catalyzes the ATP-dependent phosphorylation of L-homoserine to L-homoserine phosphate. This chain is Homoserine kinase, found in Thermus thermophilus (strain ATCC BAA-163 / DSM 7039 / HB27).